Here is a 134-residue protein sequence, read N- to C-terminus: Ribonuclease VapC2 (134 aa).

One can recognise a PINc domain in the interval tyrosine 3–isoleucine 124. A Mg(2+)-binding site is contributed by aspartate 6.

The protein belongs to the PINc/VapC protein family. As to quaternary structure, forms complexes with VapB2; probably VapC2(4):VapB2(2) in the absence of DNA, and VapC2(4):VapB2(4) in the presence of DNA. Crystallizes as heterodimers with stoichiometry VapC2(4):VapB2(4) in the presence of its probable promoter DNA. The heterodimers are in contact via alternative VapC-VapC and VapB-VapB interactions. This subunit does not contact DNA. The cofactor is Mg(2+).

Functionally, toxic component of a type II toxin-antitoxin (TA) system. Has ssRNase activity. Upon expression in E.coli or S.cerevisiae inhibits growth in liquid culture; in S.cerevisiae its expression leads to apoptosis-like characteristics. Rapidly induces apoptosis (within 2 hours) upon microinjection into mouse fibroblasts (L929 line); pretreatment of cells with dexamethasone protects them. Probably contributes to host cell death if bacterial cell lysis occurs during host infection. Its toxic effect is neutralized by coexpression with cognate antitoxin VapB2, its RNase activity is partially inhibited in vitro by VapB2. The chain is Ribonuclease VapC2 from Rickettsia felis (strain ATCC VR-1525 / URRWXCal2) (Rickettsia azadi).